Reading from the N-terminus, the 418-residue chain is Glutamyl-tRNA reductase (418 aa).

Substrate-binding positions include 49 to 52 (TCNR), S109, 114 to 116 (EPQ), and Q120. C50 serves as the catalytic Nucleophile. Position 189-194 (189-194 (GAGETI)) interacts with NADP(+).

This sequence belongs to the glutamyl-tRNA reductase family. In terms of assembly, homodimer.

The catalysed reaction is (S)-4-amino-5-oxopentanoate + tRNA(Glu) + NADP(+) = L-glutamyl-tRNA(Glu) + NADPH + H(+). It participates in porphyrin-containing compound metabolism; protoporphyrin-IX biosynthesis; 5-aminolevulinate from L-glutamyl-tRNA(Glu): step 1/2. In terms of biological role, catalyzes the NADPH-dependent reduction of glutamyl-tRNA(Glu) to glutamate 1-semialdehyde (GSA). This Escherichia coli O7:K1 (strain IAI39 / ExPEC) protein is Glutamyl-tRNA reductase.